The chain runs to 459 residues: Trigger factor (459 aa).

The PPIase FKBP-type domain maps to 166–245; it reads GDFANIDLTA…VNSVKAEELP (80 aa).

The protein belongs to the FKBP-type PPIase family. Tig subfamily.

It is found in the cytoplasm. The catalysed reaction is [protein]-peptidylproline (omega=180) = [protein]-peptidylproline (omega=0). Involved in protein export. Acts as a chaperone by maintaining the newly synthesized protein in an open conformation. Functions as a peptidyl-prolyl cis-trans isomerase. This is Trigger factor from Bifidobacterium longum (strain DJO10A).